The chain runs to 166 residues: Putative universal stress protein SE_1385 (166 aa).

It belongs to the universal stress protein A family.

It is found in the cytoplasm. This Staphylococcus epidermidis (strain ATCC 12228 / FDA PCI 1200) protein is Putative universal stress protein SE_1385.